The following is a 22-amino-acid chain: Plasticin-TR (22 aa).

The protein belongs to the frog skin active peptide (FSAP) family. Plasticin subfamily. Exhibits a propensity to self-association and forms helical oligomers in membrane-mimetic environments. Expressed by the skin glands.

It is found in the secreted. The protein resides in the target cell membrane. Its function is as follows. Has no antimicrobial activity against Gram-negative bacterium E.coli ATCC 25922, Gram-positive bacterium S.epidermidis ATCC 12228 and against fungus C.albicans ATCC 24433 at concentrations up to 100 uM. Has an anti-inflammatory effect, since it inhibits the production of the pro-inflammatory cytokines TNF-alpha and IL-1 beta. Has high activity of stimulation of insulin release, which may protect the species from being eaten by predators by causing fatal hypoglycemia. Is not cytotoxic to cancer line cells. Does not show hemolysis on mouse erythrocytes. Adopts a mixture of alpha-helical and beta-sheet structures. The protein is Plasticin-TR of Phyllomedusa trinitatis (Trinidad leaf frog).